A 279-amino-acid chain; its full sequence is Urease accessory protein UreD (279 aa).

Belongs to the UreD family. UreD, UreF and UreG form a complex that acts as a GTP-hydrolysis-dependent molecular chaperone, activating the urease apoprotein by helping to assemble the nickel containing metallocenter of UreC. The UreE protein probably delivers the nickel.

It localises to the cytoplasm. Functionally, required for maturation of urease via the functional incorporation of the urease nickel metallocenter. The sequence is that of Urease accessory protein UreD from Streptococcus thermophilus (strain ATCC BAA-250 / LMG 18311).